A 316-amino-acid chain; its full sequence is Acetaldehyde dehydrogenase (316 aa).

11-14 (SGNI) is an NAD(+) binding site. Catalysis depends on C131, which acts as the Acyl-thioester intermediate. Residues 162–170 (SAGPGTRAN) and N289 each bind NAD(+).

It belongs to the acetaldehyde dehydrogenase family. As to quaternary structure, interacts with MhpE.

The catalysed reaction is acetaldehyde + NAD(+) + CoA = acetyl-CoA + NADH + H(+). Its pathway is aromatic compound metabolism; 3-phenylpropanoate degradation. Functionally, catalyzes the conversion of acetaldehyde to acetyl-CoA, using NAD(+) and coenzyme A. Is the final enzyme in the meta-cleavage pathway for the degradation of aromatic compounds. The sequence is that of Acetaldehyde dehydrogenase from Escherichia coli O81 (strain ED1a).